A 389-amino-acid polypeptide reads, in one-letter code: 23S rRNA (uracil(747)-C(5))-methyltransferase RlmC (389 aa).

Cysteine 12, cysteine 20, cysteine 23, and cysteine 99 together coordinate [4Fe-4S] cluster. S-adenosyl-L-methionine-binding residues include glutamine 224, phenylalanine 253, glutamate 274, and asparagine 321. Residue cysteine 348 is the Nucleophile of the active site.

Belongs to the class I-like SAM-binding methyltransferase superfamily. RNA M5U methyltransferase family. RlmC subfamily.

It carries out the reaction uridine(747) in 23S rRNA + S-adenosyl-L-methionine = 5-methyluridine(747) in 23S rRNA + S-adenosyl-L-homocysteine + H(+). Its function is as follows. Catalyzes the formation of 5-methyl-uridine at position 747 (m5U747) in 23S rRNA. The polypeptide is 23S rRNA (uracil(747)-C(5))-methyltransferase RlmC (Shewanella sp. (strain W3-18-1)).